The sequence spans 429 residues: GDP-fucose protein O-fucosyltransferase 2 (429 aa).

Positions 1–21 (MATLSFVFLLLGAVSWPPASA) are cleaved as a signal peptide. 53-57 (PEGFN) provides a ligand contact to GDP-beta-L-fucose. Glu-54 functions as the Proton acceptor in the catalytic mechanism. Cysteines 161 and 192 form a disulfide. Residues Asn-189, Asn-209, and Asn-259 are each glycosylated (N-linked (GlcNAc...) asparagine). GDP-beta-L-fucose contacts are provided by residues 292–294 (HLR), Asp-371, and 388–389 (TF). Residues Cys-412 and Cys-419 are joined by a disulfide bond.

It belongs to the glycosyltransferase 68 family.

Its subcellular location is the endoplasmic reticulum. The protein resides in the golgi apparatus. The catalysed reaction is L-seryl-[protein] + GDP-beta-L-fucose = 3-O-(alpha-L-fucosyl)-L-seryl-[protein] + GDP + H(+). It carries out the reaction L-threonyl-[protein] + GDP-beta-L-fucose = 3-O-(alpha-L-fucosyl)-L-threonyl-[protein] + GDP + H(+). Its pathway is protein modification; protein glycosylation. Catalyzes the reaction that attaches fucose through an O-glycosidic linkage to a conserved serine or threonine residue in the consensus sequence C1-X-X-S/T-C2 of thrombospondin type I repeats (TSRs) where C1 and C2 are the first and second cysteines of the repeat, respectively. O-fucosylates members of several protein families including the ADAMTS, the thrombospondin (TSP) and spondin families. Required for the proper secretion of ADAMTS family members such as ADAMTSL1 and ADAMTS13. The O-fucosylation of TSRs is also required for restricting epithelial to mesenchymal transition (EMT), maintaining the correct patterning of mesoderm and localization of the definite endoderm. In Pan troglodytes (Chimpanzee), this protein is GDP-fucose protein O-fucosyltransferase 2 (POFUT2).